The sequence spans 78 residues: Large ribosomal subunit protein bL28 (78 aa).

Residues 1-21 (MSRVCQVTGKRPVSGNNRSHA) form a disordered region.

Belongs to the bacterial ribosomal protein bL28 family.

The sequence is that of Large ribosomal subunit protein bL28 from Sodalis glossinidius (strain morsitans).